The primary structure comprises 311 residues: Pyrimidine-specific ribonucleoside hydrolase RihA (311 aa).

Residue His-240 is part of the active site.

This sequence belongs to the IUNH family. RihA subfamily.

Functionally, hydrolyzes with equal efficiency cytidine or uridine to ribose and cytosine or uracil, respectively. The chain is Pyrimidine-specific ribonucleoside hydrolase RihA from Escherichia coli (strain ATCC 8739 / DSM 1576 / NBRC 3972 / NCIMB 8545 / WDCM 00012 / Crooks).